A 166-amino-acid polypeptide reads, in one-letter code: P2Y purinoceptor 2 (166 aa).

Topologically, residues 1 to 24 (VHRCLGVLRPLHSLRWGRARYARR) are cytoplasmic. A helical membrane pass occupies residues 25–45 (VAAVVWVLVLACQAPVLYFVT). At 46-72 (TSVRGTRITCHDTSARELFSHFVAYSS) the chain is on the extracellular side. Residues 73 to 93 (VMLSLLFAVPFSVILVCYVLM) form a helical membrane-spanning segment. Residues 94–115 (ARRLLKPAYGTTGGLPRAKRKS) are Cytoplasmic-facing. The helical transmembrane segment at 116–136 (VRTIALVLAVFTLCFLPFHVT) threads the bilayer. At 137–159 (RTLYYSFRSLDLSCHTLNAINMA) the chain is on the extracellular side. A helical membrane pass occupies residues 160 to 166 (YKITRPL).

This sequence belongs to the G-protein coupled receptor 1 family.

The protein localises to the cell membrane. Receptor for ATP and UTP coupled to G-proteins that activate a phosphatidylinositol-calcium second messenger system. This is P2Y purinoceptor 2 (P2RY2) from Cricetulus griseus (Chinese hamster).